Consider the following 876-residue polypeptide: Alanine--tRNA ligase (876 aa).

Residues His-566, His-570, Cys-667, and His-671 each coordinate Zn(2+).

Belongs to the class-II aminoacyl-tRNA synthetase family. Zn(2+) is required as a cofactor.

The protein localises to the cytoplasm. The enzyme catalyses tRNA(Ala) + L-alanine + ATP = L-alanyl-tRNA(Ala) + AMP + diphosphate. Catalyzes the attachment of alanine to tRNA(Ala) in a two-step reaction: alanine is first activated by ATP to form Ala-AMP and then transferred to the acceptor end of tRNA(Ala). Also edits incorrectly charged Ser-tRNA(Ala) and Gly-tRNA(Ala) via its editing domain. This chain is Alanine--tRNA ligase, found in Albidiferax ferrireducens (strain ATCC BAA-621 / DSM 15236 / T118) (Rhodoferax ferrireducens).